The chain runs to 236 residues: Small ribosomal subunit protein uS2c (236 aa).

This sequence belongs to the universal ribosomal protein uS2 family.

Its subcellular location is the plastid. It is found in the chloroplast. The chain is Small ribosomal subunit protein uS2c (rps2) from Chaetosphaeridium globosum (Charophycean green alga).